An 89-amino-acid chain; its full sequence is Small ribosomal subunit protein uS17 (89 aa).

This sequence belongs to the universal ribosomal protein uS17 family. In terms of assembly, part of the 30S ribosomal subunit.

Functionally, one of the primary rRNA binding proteins, it binds specifically to the 5'-end of 16S ribosomal RNA. The polypeptide is Small ribosomal subunit protein uS17 (Leptospira interrogans serogroup Icterohaemorrhagiae serovar Lai (strain 56601)).